The sequence spans 562 residues: Glucose-6-phosphate isomerase (562 aa).

Catalysis depends on Glu-370, which acts as the Proton donor. Residues His-401 and Lys-526 contribute to the active site.

Belongs to the GPI family.

It is found in the cytoplasm. The catalysed reaction is alpha-D-glucose 6-phosphate = beta-D-fructose 6-phosphate. The protein operates within carbohydrate biosynthesis; gluconeogenesis. It functions in the pathway carbohydrate degradation; glycolysis; D-glyceraldehyde 3-phosphate and glycerone phosphate from D-glucose: step 2/4. Its function is as follows. Catalyzes the reversible isomerization of glucose-6-phosphate to fructose-6-phosphate. The sequence is that of Glucose-6-phosphate isomerase from Deinococcus geothermalis (strain DSM 11300 / CIP 105573 / AG-3a).